We begin with the raw amino-acid sequence, 647 residues long: Probable potassium transport system protein Kup (647 aa).

The next 13 helical transmembrane spans lie at 32 to 52 (IALM…SPLY), 74 to 94 (VISM…VLFV), 124 to 144 (LLII…AIIT), 166 to 186 (FVLP…KTGT), 193 to 213 (FGPI…HQVI), 230 to 250 (FLIE…LVLT), 271 to 291 (WFFI…AMFL), 300 to 320 (PFFL…ATAA), 322 to 342 (VIAS…AILL), 361 to 381 (IYMP…VLAF), 390 to 410 (AYGI…AIVM), 418 to 438 (TILV…FLTA), and 443 to 463 (IMEG…FLMT).

This sequence belongs to the HAK/KUP transporter (TC 2.A.72) family.

It is found in the cell inner membrane. It carries out the reaction K(+)(in) + H(+)(in) = K(+)(out) + H(+)(out). Its function is as follows. Transport of potassium into the cell. Likely operates as a K(+):H(+) symporter. The polypeptide is Probable potassium transport system protein Kup (Polynucleobacter asymbioticus (strain DSM 18221 / CIP 109841 / QLW-P1DMWA-1) (Polynucleobacter necessarius subsp. asymbioticus)).